The chain runs to 126 residues: Fluoride-specific ion channel FluC (126 aa).

4 helical membrane passes run 6–26 (FVAV…FAVL), 36–56 (YGTL…VGFF), 68–88 (LLAV…SSEV), and 99–119 (IGML…MLGL). Na(+) is bound by residues Gly-76 and Thr-79.

It belongs to the fluoride channel Fluc/FEX (TC 1.A.43) family.

Its subcellular location is the cell inner membrane. It carries out the reaction fluoride(in) = fluoride(out). Its activity is regulated as follows. Na(+) is not transported, but it plays an essential structural role and its presence is essential for fluoride channel function. Fluoride-specific ion channel. Important for reducing fluoride concentration in the cell, thus reducing its toxicity. The chain is Fluoride-specific ion channel FluC from Ralstonia nicotianae (strain ATCC BAA-1114 / GMI1000) (Ralstonia solanacearum).